The primary structure comprises 1202 residues: PAN2-PAN3 deadenylation complex catalytic subunit PAN2 (1202 aa).

4 WD repeats span residues 153–193 (DENE…QKYA), 195–231 (ETPG…VEHE), 244–280 (VHGN…AITP), and 328–367 (PVGP…SFNP). Residues 368 to 485 (YSRETEFALP…VGREEEPHLH (118 aa)) are linker. Residues 486-924 (MVSKKYRKVT…VPAILYYVKR (439 aa)) form the USP domain. Ser-791 bears the Phosphoserine mark. The Exonuclease domain maps to 975–1147 (VGLDAEFVTL…EDARTALQLY (173 aa)). Asp-978, Glu-980, Asp-1087, and Asp-1139 together coordinate a divalent metal cation. The residue at position 1189 (Ser-1189) is a Phosphoserine.

Belongs to the peptidase C19 family. PAN2 subfamily. Forms a heterotrimer with an asymmetric homodimer of the regulatory subunit PAN3 to form the poly(A)-nuclease (PAN) deadenylation complex. Interacts with PAN3 isoform 1/Pan3L and isoform 3/Pan3S. Interacts with ZFP36. The cofactor is a divalent metal cation.

Its subcellular location is the cytoplasm. It is found in the P-body. The protein localises to the nucleus. The catalysed reaction is Exonucleolytic cleavage of poly(A) to 5'-AMP.. Positively regulated by the regulatory subunit PAN3. Catalytic subunit of the poly(A)-nuclease (PAN) deadenylation complex, one of two cytoplasmic mRNA deadenylases involved in general and miRNA-mediated mRNA turnover. PAN specifically shortens poly(A) tails of RNA and the activity is stimulated by poly(A)-binding protein (PABP). PAN deadenylation is followed by rapid degradation of the shortened mRNA tails by the CCR4-NOT complex. Deadenylated mRNAs are then degraded by two alternative mechanisms, namely exosome-mediated 3'-5' exonucleolytic degradation, or deadenylation-dependent mRNA decaping and subsequent 5'-3' exonucleolytic degradation by XRN1. Also acts as an important regulator of the HIF1A-mediated hypoxic response. Required for HIF1A mRNA stability independent of poly(A) tail length regulation. This Homo sapiens (Human) protein is PAN2-PAN3 deadenylation complex catalytic subunit PAN2.